Reading from the N-terminus, the 300-residue chain is Centromere protein O (300 aa).

2 coiled-coil regions span residues 18 to 42 and 83 to 109; these read LAHL…QSVQ and NQTV…QAYH. Ser-35 is subject to Phosphoserine.

The protein belongs to the CENP-O/MCM21 family. In terms of assembly, component of the CENPA-CAD complex, composed of CENPI, CENPK, CENPL, CENPO, CENPP, CENPQ, CENPR and CENPS. The CENPA-CAD complex interacts with the CENPA-NAC complex, at least composed of CENPA, CENPC, CENPH, CENPM, CENPN, CENPT and CENPU.

The protein localises to the nucleus. Its subcellular location is the chromosome. It localises to the centromere. It is found in the kinetochore. Its function is as follows. Component of the CENPA-CAD (nucleosome distal) complex, a complex recruited to centromeres which is involved in assembly of kinetochore proteins, mitotic progression and chromosome segregation. May be involved in incorporation of newly synthesized CENPA into centromeres via its interaction with the CENPA-NAC complex. Modulates the kinetochore-bound levels of NDC80 complex. The polypeptide is Centromere protein O (CENPO) (Homo sapiens (Human)).